We begin with the raw amino-acid sequence, 340 residues long: rRNA adenine N-6-methyltransferase (340 aa).

Positions Met-1–Arg-25 are enriched in low complexity. The tract at residues Met-1–Gln-37 is disordered. S-adenosyl-L-methionine is bound by residues Asn-38, Leu-40, Gly-65, Glu-86, Asp-111, and Ala-127. The interval Arg-284–Ala-340 is disordered. The segment covering Pro-301–Gly-314 has biased composition (gly residues). The segment covering Pro-315–Gly-329 has biased composition (basic and acidic residues).

It belongs to the class I-like SAM-binding methyltransferase superfamily. rRNA adenine N(6)-methyltransferase family.

Its function is as follows. Involved in erythromycin resistance. This chain is rRNA adenine N-6-methyltransferase (ermA), found in Aeromicrobium erythreum (strain ATCC 51598 / DSM 8599 / JCM 8359 / NBRC 15406 / NRRL B-3381).